Here is a 147-residue protein sequence, read N- to C-terminus: Hemoglobin subunit beta (147 aa).

One can recognise a Globin domain in the interval 3–147; the sequence is EWTDDERAII…VVSALGRQYH (145 aa). H64 and H93 together coordinate heme b.

This sequence belongs to the globin family. In terms of assembly, heterotetramer of two alpha chains and two beta chains. Red blood cells.

Functionally, involved in oxygen transport from gills to the various peripheral tissues. This chain is Hemoglobin subunit beta (hbb), found in Melanogrammus aeglefinus (Haddock).